We begin with the raw amino-acid sequence, 201 residues long: Cytochrome c oxidase assembly protein CtaG (201 aa).

Residues 1 to 12 lie on the Cytoplasmic side of the membrane; sequence MTDQGENEKKQR. The helical; Signal-anchor for type II membrane protein transmembrane segment at 13-35 threads the bilayer; that stretch reads RSNATIAVACLSFFVCMIGAAYA. Residues 36 to 201 lie on the Periplasmic side of the membrane; sequence SVPLYRIFCQ…KAVGSTRNGG (166 aa).

It belongs to the COX11/CtaG family.

Its subcellular location is the cell inner membrane. Functionally, exerts its effect at some terminal stage of cytochrome c oxidase synthesis, probably by being involved in the insertion of the copper B into subunit I. This is Cytochrome c oxidase assembly protein CtaG from Brucella suis biovar 1 (strain 1330).